The sequence spans 247 residues: MQTQVLFEHPLNEKMRTWLRIEFLIQQLTVNLPIVDHAGALHFFRNVSELLDVFERGEVRTELLKELDRQQRKLQTWIGVPGVDQSRIEALIQQLKAAGSVLISAPRIGQFLREDRLIALVRQRLSIPGGCCSFDLPTLHIWLHLPQTQRDSQVETWIASLNPLTQALTMVLDLIRQSAPFRKQTSLNGFYQDNGGDADLLRLNLSLDSQLYPQISGHKSRFAIRFMPLDSENGQVPERLDFELACC.

The protein belongs to the ZapD family. In terms of assembly, interacts with FtsZ.

Its subcellular location is the cytoplasm. Its function is as follows. Cell division factor that enhances FtsZ-ring assembly. Directly interacts with FtsZ and promotes bundling of FtsZ protofilaments, with a reduction in FtsZ GTPase activity. The protein is Cell division protein ZapD of Escherichia coli O7:K1 (strain IAI39 / ExPEC).